We begin with the raw amino-acid sequence, 541 residues long: Myrosinase 1 (541 aa).

An N-terminal signal peptide occupies residues 1–19 (MKLLMLAFVFLLALATCKG). 3 disulfide bridges follow: cysteine 24-cysteine 449, cysteine 32-cysteine 445, and cysteine 224-cysteine 232. N-linked (GlcNAc...) asparagine glycosylation is present at asparagine 33. Glutamine 57 lines the a beta-D-glucoside pocket. The N-linked (GlcNAc...) asparagine glycan is linked to asparagine 108. Histidine 159 contributes to the a beta-D-glucoside binding site. Asparagine 175 carries N-linked (GlcNAc...) asparagine glycosylation. 204 to 205 (NQ) is a binding site for a beta-D-glucoside. Asparagine 236 carries N-linked (GlcNAc...) asparagine glycosylation. A beta-D-glucoside is bound at residue tyrosine 348. Residues asparagine 356 and asparagine 379 are each glycosylated (N-linked (GlcNAc...) asparagine). A beta-D-glucoside-binding positions include glutamate 420, tryptophan 468, 475 to 476 (EF), and phenylalanine 484. The active-site Nucleophile is glutamate 420. N-linked (GlcNAc...) asparagine glycosylation is found at asparagine 493 and asparagine 512.

It belongs to the glycosyl hydrolase 1 family. As to quaternary structure, homodimer. As to expression, expressed in guard cells, phloem-associated cells and myrosin cells.

Its subcellular location is the vacuole. It catalyses the reaction a thioglucoside + H2O = a sugar + a thiol.. The catalysed reaction is Hydrolysis of terminal, non-reducing beta-D-glucosyl residues with release of beta-D-glucose.. In terms of biological role, degradation of glucosinolates (glucose residue linked by a thioglucoside bound to an amino acid derivative) to glucose, sulfate and any of the products: thiocyanates, isothiocyanates, nitriles, epithionitriles or oxazolidine-2-thiones. These toxic degradation products can deter insect herbivores. Seems to function in abscisic acid (ABA) and methyl jasmonate (MeJA) signaling in guard cells. Functionally redundant with TGG2. Hydrolyzes sinigrin and, with lower efficiency, p-nitrophenyl beta-D-glucoside. The protein is Myrosinase 1 of Arabidopsis thaliana (Mouse-ear cress).